The primary structure comprises 325 residues: Oligopeptide transport system permease protein OppB (325 aa).

Helical transmembrane passes span 12–32 (YLVL…LAFS), 102–122 (LVVG…WGAI), 135–155 (LALL…ILGA), 189–208 (LQHL…AGFS), 248–268 (IPMA…AVFV), and 290–310 (TNIV…AGLL). Residues 95–311 (IGVSLRLLVV…AVVLLAGLLS (217 aa)) enclose the ABC transmembrane type-1 domain.

The protein belongs to the binding-protein-dependent transport system permease family. OppBC subfamily. In terms of assembly, the complex is composed of an ATP-binding protein (OppD), two transmembrane proteins (OppB and OppC) and a solute-binding protein (OppA).

It localises to the cell inner membrane. Functionally, part of the ABC transporter complex OppABCD involved in the uptake of oligopeptides. Responsible for the translocation of the substrate across the membrane. The sequence is that of Oligopeptide transport system permease protein OppB from Mycobacterium bovis (strain ATCC BAA-935 / AF2122/97).